The chain runs to 595 residues: NADH-quinone oxidoreductase subunit C/D (595 aa).

The tract at residues 1 to 185 (MTDLTAQAAC…DPFELTKAKQ (185 aa)) is NADH dehydrogenase I subunit C. The segment at 209–595 (DFMFLNLGPN…IDFVMSDVDR (387 aa)) is NADH dehydrogenase I subunit D.

It in the N-terminal section; belongs to the complex I 30 kDa subunit family. The protein in the C-terminal section; belongs to the complex I 49 kDa subunit family. NDH-1 is composed of 13 different subunits. Subunits NuoB, CD, E, F, and G constitute the peripheral sector of the complex.

Its subcellular location is the cell inner membrane. The catalysed reaction is a quinone + NADH + 5 H(+)(in) = a quinol + NAD(+) + 4 H(+)(out). Its function is as follows. NDH-1 shuttles electrons from NADH, via FMN and iron-sulfur (Fe-S) centers, to quinones in the respiratory chain. The immediate electron acceptor for the enzyme in this species is believed to be ubiquinone. Couples the redox reaction to proton translocation (for every two electrons transferred, four hydrogen ions are translocated across the cytoplasmic membrane), and thus conserves the redox energy in a proton gradient. This is NADH-quinone oxidoreductase subunit C/D from Enterobacter sp. (strain 638).